We begin with the raw amino-acid sequence, 71 residues long: Prokaryotic ubiquitin-like protein Pup (71 aa).

Over residues 1 to 18 the composition is skewed to low complexity; it reads MATRDSGGQSQTGRSQQG. Residues 1–42 form a disordered region; the sequence is MATRDSGGQSQTGRSQQGEEIEDVTTEASPEVAERHAEITED. Residues 27–65 form an ARC ATPase binding region; it reads EASPEVAERHAEITEDVDDLLDEIDSVLEENAEEFVRGY. Residues 31–60 are a coiled coil; the sequence is EVAERHAEITEDVDDLLDEIDSVLEENAEE. An Isoglutamyl lysine isopeptide (Glu-Lys) (interchain with K-? in acceptor proteins) cross-link involves residue glutamate 71.

It belongs to the prokaryotic ubiquitin-like protein family. As to quaternary structure, strongly interacts with the proteasome-associated ATPase ARC through a hydrophobic interface; the interacting region of Pup lies in its C-terminal half. There is one Pup binding site per ARC hexamer ring.

It participates in protein degradation; proteasomal Pup-dependent pathway. Functionally, protein modifier that is covalently attached to lysine residues of substrate proteins, thereby targeting them for proteasomal degradation. The tagging system is termed pupylation. In Salinispora arenicola (strain CNS-205), this protein is Prokaryotic ubiquitin-like protein Pup.